The primary structure comprises 303 residues: Polyisoprenyl-teichoic acid--peptidoglycan teichoic acid transferase TagU (303 aa).

The Cytoplasmic portion of the chain corresponds to 1-4; the sequence is MKKK. A helical; Signal-anchor for type II membrane protein membrane pass occupies residues 5–25; it reads ILFWVLGILGVLIIGGGIYAY. At 26 to 303 the chain is on the extracellular side; it reads NVYSSVSNTL…KLRTHLEVTK (278 aa).

It belongs to the LytR/CpsA/Psr (LCP) family.

It localises to the cell membrane. It functions in the pathway cell wall biogenesis. Its function is as follows. May catalyze the final step in cell wall teichoic acid biosynthesis, the transfer of the anionic cell wall polymers (APs) from their lipid-linked precursor to the cell wall peptidoglycan (PG). This is Polyisoprenyl-teichoic acid--peptidoglycan teichoic acid transferase TagU from Bacillus anthracis (strain A0248).